Here is a 745-residue protein sequence, read N- to C-terminus: Phosphoribosylformylglycinamidine synthase subunit PurL (745 aa).

His-47 is a catalytic residue. Positions 50 and 90 each coordinate ATP. Mg(2+) is bound at residue Glu-92. Substrate contacts are provided by residues 93-96 (SHNH) and Arg-115. His-94 acts as the Proton acceptor in catalysis. Asp-116 lines the Mg(2+) pocket. Gln-240 contacts substrate. Residue Asp-268 coordinates Mg(2+). 312–314 (ESQ) is a binding site for substrate. Asn-501 and Gly-538 together coordinate ATP. Asn-539 lines the Mg(2+) pocket. Position 541 (Ser-541) interacts with substrate.

This sequence belongs to the FGAMS family. Monomer. Part of the FGAM synthase complex composed of 1 PurL, 1 PurQ and 2 PurS subunits.

It is found in the cytoplasm. It catalyses the reaction N(2)-formyl-N(1)-(5-phospho-beta-D-ribosyl)glycinamide + L-glutamine + ATP + H2O = 2-formamido-N(1)-(5-O-phospho-beta-D-ribosyl)acetamidine + L-glutamate + ADP + phosphate + H(+). It functions in the pathway purine metabolism; IMP biosynthesis via de novo pathway; 5-amino-1-(5-phospho-D-ribosyl)imidazole from N(2)-formyl-N(1)-(5-phospho-D-ribosyl)glycinamide: step 1/2. Functionally, part of the phosphoribosylformylglycinamidine synthase complex involved in the purines biosynthetic pathway. Catalyzes the ATP-dependent conversion of formylglycinamide ribonucleotide (FGAR) and glutamine to yield formylglycinamidine ribonucleotide (FGAM) and glutamate. The FGAM synthase complex is composed of three subunits. PurQ produces an ammonia molecule by converting glutamine to glutamate. PurL transfers the ammonia molecule to FGAR to form FGAM in an ATP-dependent manner. PurS interacts with PurQ and PurL and is thought to assist in the transfer of the ammonia molecule from PurQ to PurL. This Leptospira borgpetersenii serovar Hardjo-bovis (strain JB197) protein is Phosphoribosylformylglycinamidine synthase subunit PurL.